The sequence spans 285 residues: Probable endonuclease 4 (285 aa).

9 residues coordinate Zn(2+): His69, His109, Glu145, Asp179, His182, His216, Asp229, His231, and Glu261.

This sequence belongs to the AP endonuclease 2 family. It depends on Zn(2+) as a cofactor.

The catalysed reaction is Endonucleolytic cleavage to 5'-phosphooligonucleotide end-products.. Its function is as follows. Endonuclease IV plays a role in DNA repair. It cleaves phosphodiester bonds at apurinic or apyrimidinic (AP) sites, generating a 3'-hydroxyl group and a 5'-terminal sugar phosphate. The protein is Probable endonuclease 4 of Salmonella schwarzengrund (strain CVM19633).